The primary structure comprises 490 residues: GTPase Der (490 aa).

EngA-type G domains follow at residues 3–166 and 203–376; these read PVVA…MDDV and IKLA…DSST. GTP contacts are provided by residues 9–16, 56–60, 118–121, 209–216, 256–260, and 321–324; these read GRPNVGKS, DTGGI, NKTD, DTAGV, and NKWD. Positions 377–461 constitute a KH-like domain; that stretch reads RRVSTAMLTR…PIRIQFKEGE (85 aa).

Belongs to the TRAFAC class TrmE-Era-EngA-EngB-Septin-like GTPase superfamily. EngA (Der) GTPase family. In terms of assembly, associates with the 50S ribosomal subunit.

Functionally, GTPase that plays an essential role in the late steps of ribosome biogenesis. This chain is GTPase Der, found in Citrobacter koseri (strain ATCC BAA-895 / CDC 4225-83 / SGSC4696).